Here is a 1372-residue protein sequence, read N- to C-terminus: DNA-directed RNA polymerase subunit beta' (1372 aa).

4 residues coordinate Zn(2+): C69, C71, C84, and C87. Residues D460, D462, and D464 each coordinate Mg(2+). Zn(2+) contacts are provided by C808, C882, C889, and C892.

Belongs to the RNA polymerase beta' chain family. The RNAP catalytic core consists of 2 alpha, 1 beta, 1 beta' and 1 omega subunit. When a sigma factor is associated with the core the holoenzyme is formed, which can initiate transcription. The cofactor is Mg(2+). Zn(2+) serves as cofactor.

It catalyses the reaction RNA(n) + a ribonucleoside 5'-triphosphate = RNA(n+1) + diphosphate. Functionally, DNA-dependent RNA polymerase catalyzes the transcription of DNA into RNA using the four ribonucleoside triphosphates as substrates. This is DNA-directed RNA polymerase subunit beta' from Rickettsia prowazekii (strain Madrid E).